Here is a 745-residue protein sequence, read N- to C-terminus: MERPPGLRPGAGGPWEMRERLGTGGFGNVSLYQHRELDLKIAIKSCRLELSSKNRERWCHEIQIMKKLDHANVVKACDVPEELNFLINDVPLLAMEYCSGGDLRKLLNKPENCCGLKESQILSLLSDIGSGIRYLHENKIIHRDLKPENIVLQDVGGKTIHKIIDLGYAKDVDQGSLCTSFVGTLQYLAPELFENKPYTATVDYWSFGTMVFECIAGYRPFLHHLQPFTWHEKIKKKDPKCIFACEEMTGEVRFSSHLPQPNSLCSLIVEPMESWLQLMLNWDPQQRGGPIDLTLKQPRCFALMDHILNLKIVHILNMTSAKIISFLLPCDESLHSLQSRIERETGINTGSQELLSETGISLDPRKPASQCVLDGVRGCDSYMVYLFDKSKTVYEGPFASRSLSDCVNYIVQDSKIQLPIIQLRKVWAEAVHYVSGLKEDYSRLFQGQRAAMLSLLRYNANLTKMKNTLISASQQLKAKLEFFRKSIQLDLERYSEQMTYGISSEKMLKAWKEMEEKAIHYSEVGVIGYLEDQIMSLHTEIMELQKSPYGRRQGDLMESLEQRAIDLYKQLKHRPPDHLYSDSTEMVKIIVHTVQSQDRVLKELFGHLSKLLGCKQKIIDLLPKVEVALSNIKEADNTVMFMQGKRQKEIWHLLKIACTQSSARSLVGSSLEGTVTPPVSAWLPPTLADREHPLTCVVTPQDGETLAQMIEENLNCLGHLSTIIREANEDQSSSLMSLDWSWLAE.

Residues 15-300 (WEMRERLGTG…IDLTLKQPRC (286 aa)) form the Protein kinase domain. Residues 21 to 29 (LGTGGFGNV) and lysine 44 each bind ATP. Threonine 23 carries the post-translational modification Phosphothreonine; by PKB/AKT1 and SGK1. The active-site Proton acceptor is aspartate 144. A Phosphoserine; by MAP3K14 modification is found at serine 176. Serine 180 bears the Phosphoserine; by SGK1 mark. Positions 455 to 476 (LLRYNANLTKMKNTLISASQQL) are leucine-zipper. The interval 738-743 (LDWSWL) is NEMO-binding.

This sequence belongs to the protein kinase superfamily. Ser/Thr protein kinase family. I-kappa-B kinase subfamily. As to quaternary structure, component of the I-kappa-B-kinase (IKK) core complex consisting of CHUK, IKBKB and IKBKG; probably four alpha/CHUK-beta/IKBKB dimers are associated with four gamma/IKBKG subunits. The IKK core complex seems to associate with regulatory or adapter proteins to form a IKK-signalosome holo-complex. The IKK complex associates with TERF2IP/RAP1, leading to promote IKK-mediated phosphorylation of RELA/p65. Part of a complex composed of NCOA2, NCOA3, CHUK/IKKA, IKBKB, IKBKG and CREBBP. Part of a 70-90 kDa complex at least consisting of CHUK/IKKA, IKBKB, NFKBIA, RELA, ELP1 and MAP3K14. Directly interacts with TRPC4AP. May interact with TRAF2. Interacts with NALP2. May interact with MAVS/IPS1. Interacts with ARRB1 and ARRB2. Interacts with NLRC5; prevents CHUK phosphorylation and kinase activity. Interacts with PIAS1; this interaction induces PIAS1 phosphorylation. Interacts with ZNF268 isoform 2; the interaction is further increased in a TNF-alpha-dependent manner. Interacts with LRRC14. Interacts with SASH1. Directly interacts with DDX3X after the physiological activation of the TLR7 and TLR8 pathways; this interaction enhances CHUK autophosphorylation. In terms of processing, ubiquitinated by TRIM56 via 'Lys-63'-linked ubiquitination, promoting activation of CHUK/IKKA. Phosphorylated by MAP3K14/NIK, AKT and to a lesser extent by MEKK1, and dephosphorylated by PP2A. Autophosphorylated. In terms of tissue distribution, ubiquitous only for isoform 1, isoforms 2 and 3 are expressed predominantly in brain and T-lymphocytes.

It localises to the cytoplasm. The protein localises to the nucleus. It carries out the reaction L-seryl-[I-kappa-B protein] + ATP = O-phospho-L-seryl-[I-kappa-B protein] + ADP + H(+). Its activity is regulated as follows. Activated when phosphorylated and inactivated when dephosphorylated. Serine kinase that plays an essential role in the NF-kappa-B signaling pathway which is activated by multiple stimuli such as inflammatory cytokines, bacterial or viral products, DNA damages or other cellular stresses. Acts as a part of the canonical IKK complex in the conventional pathway of NF-kappa-B activation and phosphorylates inhibitors of NF-kappa-B on serine residues. These modifications allow polyubiquitination of the inhibitors and subsequent degradation by the proteasome. In turn, free NF-kappa-B is translocated into the nucleus and activates the transcription of hundreds of genes involved in immune response, growth control, or protection against apoptosis. Negatively regulates the pathway by phosphorylating the scaffold protein TAXBP1 and thus promoting the assembly of the A20/TNFAIP3 ubiquitin-editing complex (composed of A20/TNFAIP3, TAX1BP1, and the E3 ligases ITCH and RNF11). Therefore, CHUK plays a key role in the negative feedback of NF-kappa-B canonical signaling to limit inflammatory gene activation. As part of the non-canonical pathway of NF-kappa-B activation, the MAP3K14-activated CHUK/IKKA homodimer phosphorylates NFKB2/p100 associated with RelB, inducing its proteolytic processing to NFKB2/p52 and the formation of NF-kappa-B RelB-p52 complexes. In turn, these complexes regulate genes encoding molecules involved in B-cell survival and lymphoid organogenesis. Also participates in the negative feedback of the non-canonical NF-kappa-B signaling pathway by phosphorylating and destabilizing MAP3K14/NIK. Within the nucleus, phosphorylates CREBBP and consequently increases both its transcriptional and histone acetyltransferase activities. Modulates chromatin accessibility at NF-kappa-B-responsive promoters by phosphorylating histones H3 at 'Ser-10' that are subsequently acetylated at 'Lys-14' by CREBBP. Additionally, phosphorylates the CREBBP-interacting protein NCOA3. Also phosphorylates FOXO3 and may regulate this pro-apoptotic transcription factor. Phosphorylates RIPK1 at 'Ser-25' which represses its kinase activity and consequently prevents TNF-mediated RIPK1-dependent cell death. Phosphorylates AMBRA1 following mitophagy induction, promoting AMBRA1 interaction with ATG8 family proteins and its mitophagic activity. The protein is Inhibitor of nuclear factor kappa-B kinase subunit alpha (Chuk) of Mus musculus (Mouse).